The sequence spans 333 residues: Dihydroorotate dehydrogenase (quinone) (333 aa).

Residues 56 to 60 (AGLDK) and Thr-80 each bind FMN. Residue Lys-60 participates in substrate binding. Position 105–109 (105–109 (NRMGF)) interacts with substrate. Residues Asn-133 and Asn-166 each coordinate FMN. Asn-166 is a substrate binding site. Catalysis depends on Ser-169, which acts as the Nucleophile. A substrate-binding site is contributed by Asn-171. Residues Lys-211 and Thr-239 each coordinate FMN. Substrate is bound at residue 240 to 241 (NT). FMN-binding positions include Gly-262, Gly-291, and 312-313 (YS).

Belongs to the dihydroorotate dehydrogenase family. Type 2 subfamily. In terms of assembly, monomer. Requires FMN as cofactor.

The protein localises to the cell membrane. It carries out the reaction (S)-dihydroorotate + a quinone = orotate + a quinol. The protein operates within pyrimidine metabolism; UMP biosynthesis via de novo pathway; orotate from (S)-dihydroorotate (quinone route): step 1/1. Functionally, catalyzes the conversion of dihydroorotate to orotate with quinone as electron acceptor. The chain is Dihydroorotate dehydrogenase (quinone) from Legionella pneumophila (strain Lens).